The primary structure comprises 430 residues: Enolase (430 aa).

Gln163 provides a ligand contact to (2R)-2-phosphoglycerate. The active-site Proton donor is Glu205. The Mg(2+) site is built by Asp242, Glu287, and Asp314. Residues Lys339, Arg368, Ser369, and Lys390 each contribute to the (2R)-2-phosphoglycerate site. Catalysis depends on Lys339, which acts as the Proton acceptor.

This sequence belongs to the enolase family. It depends on Mg(2+) as a cofactor.

The protein localises to the cytoplasm. It localises to the secreted. The protein resides in the cell surface. The catalysed reaction is (2R)-2-phosphoglycerate = phosphoenolpyruvate + H2O. The protein operates within carbohydrate degradation; glycolysis; pyruvate from D-glyceraldehyde 3-phosphate: step 4/5. Catalyzes the reversible conversion of 2-phosphoglycerate (2-PG) into phosphoenolpyruvate (PEP). It is essential for the degradation of carbohydrates via glycolysis. This is Enolase from Bacillus licheniformis (strain ATCC 14580 / DSM 13 / JCM 2505 / CCUG 7422 / NBRC 12200 / NCIMB 9375 / NCTC 10341 / NRRL NRS-1264 / Gibson 46).